Reading from the N-terminus, the 198-residue chain is Recombination protein RecR (198 aa).

A C4-type zinc finger spans residues 57 to 72 (CRQCRTLSEEELCPQC). The Toprim domain occupies 80 to 174 (SLLCVVEGPL…TLSRIAHGVP (95 aa)).

This sequence belongs to the RecR family.

In terms of biological role, may play a role in DNA repair. It seems to be involved in an RecBC-independent recombinational process of DNA repair. It may act with RecF and RecO. This chain is Recombination protein RecR, found in Pseudomonas paraeruginosa (strain DSM 24068 / PA7) (Pseudomonas aeruginosa (strain PA7)).